The chain runs to 1254 residues: NPC intracellular cholesterol transporter 1 homolog 1b (1254 aa).

Positions 1 to 16 are cleaved as a signal peptide; sequence MKVIFATIWLIAGAWS. At 17 to 272 the chain is on the extracellular side; the sequence is QSAEQLGCIW…WKIAGLYGVT (256 aa). Disulfide bonds link C24/C81, C62/C116, C82/C120, C104/C241, C107/C161, C178/C186, C231/C246, and C243/C250. Residues N123 and N132 are each glycosylated (N-linked (GlcNAc...) asparagine). A helical transmembrane segment spans residues 273–293; the sequence is FILALIIACALSFFIFWGAFG. The Cytoplasmic portion of the chain corresponds to 294 to 325; it reads KTSAPSVCMPTLFGEFFYHGFRIWGTFCAKHP. Residues 326–346 form a helical membrane-spanning segment; that stretch reads VIVLALCSWAIAGLSFGIRYM. Residues 347 to 593 lie on the Extracellular side of the membrane; that stretch reads TITTDPVELW…AIVELSEGEV (247 aa). N389 is a glycosylation site (N-linked (GlcNAc...) asparagine). An intrachain disulfide couples C438 to C454. N479 carries N-linked (GlcNAc...) asparagine glycosylation. C491 and C500 are joined by a disulfide. An SSD domain is found at 592 to 757; that stretch reads EVSTVVISYV…ITAFVALMAI (166 aa). A helical membrane pass occupies residues 594–614; it reads STVVISYVVMFVYVAIALGHI. Over 615–625 the chain is Cytoplasmic; that stretch reads RSCRGFLRESR. The chain crosses the membrane as a helical span at residues 626–646; it reads IMLAIGGIVIVLASVVCSLGF. Topologically, residues 647–657 are extracellular; the sequence is WGYLDVTTTML. The chain crosses the membrane as a helical span at residues 658–678; the sequence is AIEVIPFLVLAVGVDNIFIMV. Residues 679–736 are Cytoplasmic-facing; the sequence is HTYQRLDHSKFKTTHEAIGEAIGQVGPSILQTAGSEMACFAIGCISDMPAVKTFAMYA. A helical membrane pass occupies residues 737–757; sequence AIAILLDFLLQITAFVALMAI. Residues 758 to 815 are Extracellular-facing; the sequence is DEKRYLDGRLDMLCCVKSGGKKINDEDGDGVDRPKEVGLLETLFKNFYSPFLLSKPVK. The helical transmembrane segment at 816–836 threads the bilayer; it reads VSVLLIFTVITCLSLMVTPSI. Over 837–857 the chain is Cytoplasmic; the sequence is EKGLDQEMSMPKNSHVVKYFR. Residues 858 to 878 form a helical membrane-spanning segment; that stretch reads YMVDLLAMGAPVYWVLKPGLN. Residues 879-1079 lie on the Extracellular side of the membrane; the sequence is YSEPLQQNLI…EQYLTIWGDA (201 aa). A disulfide bridge links C889 with C894. 2 N-linked (GlcNAc...) asparagine glycosylation sites follow: N896 and N939. 3 cysteine pairs are disulfide-bonded: C935-C990, C936-C958, and C946-C955. A helical transmembrane segment spans residues 1080–1100; the sequence is MFSLGMSLVAIFLVTLLITGL. Over 1101-1105 the chain is Cytoplasmic; the sequence is DITST. Residues 1106–1126 form a helical membrane-spanning segment; it reads FIVLFMVICILINMLGMMWAW. The Extracellular segment spans residues 1127–1132; that stretch reads SINLNA. Residues 1133-1153 form a helical membrane-spanning segment; that stretch reads ISLVNLVVCVGIGVEFVAHIV. The Cytoplasmic portion of the chain corresponds to 1154–1174; it reads RSFKRAEGTAQERARHSLNVT. Residues 1175 to 1195 traverse the membrane as a helical segment; that stretch reads GSSVLSGITLTKFAGIVVLGF. The Extracellular portion of the chain corresponds to 1196–1207; the sequence is SNSQIFQVFYFR. Residues 1208 to 1228 traverse the membrane as a helical segment; sequence MYLGIVLIGAAHGLILLPVLL. Over 1229–1254 the chain is Cytoplasmic; it reads SLLGPPQKLARSSGAEPTASITITTN.

This sequence belongs to the patched family. As to expression, expressed in the midgut.

It localises to the cell membrane. The catalysed reaction is cholesterol(in) = cholesterol(out). Its function is as follows. Important for cholesterol absorption at the midgut epithelium. Acts only in the early steps of sterol absorption, prior to Npc1a-dependent intracellular sterol trafficking. The sequence is that of NPC intracellular cholesterol transporter 1 homolog 1b from Drosophila melanogaster (Fruit fly).